Consider the following 228-residue polypeptide: 3-oxoadipate CoA-transferase subunit A (228 aa).

A CoA-binding site is contributed by 25-31 (GGFGTAG).

It belongs to the 3-oxoacid CoA-transferase subunit A family. As to quaternary structure, heterodimer.

It carries out the reaction 3-oxoadipate + succinyl-CoA = 3-oxoadipyl-CoA + succinate. The protein operates within aromatic compound metabolism; beta-ketoadipate pathway; acetyl-CoA and succinyl-CoA from 3-oxoadipate: step 1/2. In Acinetobacter baylyi (strain ATCC 33305 / BD413 / ADP1), this protein is 3-oxoadipate CoA-transferase subunit A (pcaI).